A 140-amino-acid polypeptide reads, in one-letter code: Large ribosomal subunit protein uL16 (140 aa).

Residues 1 to 17 (MPLMPKRVKHRKMHRGS) are compositionally biased toward basic residues. Residues 1-21 (MPLMPKRVKHRKMHRGSRSGN) are disordered.

It belongs to the universal ribosomal protein uL16 family. Part of the 50S ribosomal subunit.

Functionally, binds 23S rRNA and is also seen to make contacts with the A and possibly P site tRNAs. The sequence is that of Large ribosomal subunit protein uL16 from Akkermansia muciniphila (strain ATCC BAA-835 / DSM 22959 / JCM 33894 / BCRC 81048 / CCUG 64013 / CIP 107961 / Muc).